Reading from the N-terminus, the 356-residue chain is NADH-quinone oxidoreductase subunit H (356 aa).

Transmembrane regions (helical) follow at residues 18–38 (IVMVAQSVLLLVVLLIAIAYI), 87–107 (GVFLLAPLVTCVLALAAWAVI), 120–140 (VGILYIFAISSLSIYGIIMAG), 166–186 (IGFVFITVLLCAGSLNLSAIV), 202–222 (WLTFLNWYWLPLLPMFVVFYV), 265–285 (AITTMCAMGAILFMGGWLPPI), 292–312 (WVPGVIWFSLKLFFMFFLFAM), and 328–348 (LGWKVFLPLSLAMVVIVAGVL).

The protein belongs to the complex I subunit 1 family. In terms of assembly, NDH-1 is composed of 14 different subunits. Subunits NuoA, H, J, K, L, M, N constitute the membrane sector of the complex.

Its subcellular location is the cell inner membrane. It carries out the reaction a quinone + NADH + 5 H(+)(in) = a quinol + NAD(+) + 4 H(+)(out). NDH-1 shuttles electrons from NADH, via FMN and iron-sulfur (Fe-S) centers, to quinones in the respiratory chain. The immediate electron acceptor for the enzyme in this species is believed to be ubiquinone. Couples the redox reaction to proton translocation (for every two electrons transferred, four hydrogen ions are translocated across the cytoplasmic membrane), and thus conserves the redox energy in a proton gradient. This subunit may bind ubiquinone. This is NADH-quinone oxidoreductase subunit H from Nitrobacter hamburgensis (strain DSM 10229 / NCIMB 13809 / X14).